A 506-amino-acid chain; its full sequence is Probable alpha-L-arabinofuranosidase B (506 aa).

Positions 1–26 (MLSQPSRERAFVLALGLVVSSSLAAA) are cleaved as a signal peptide. The interval 27–343 (APCDIYSSGG…ADIVAANYAV (317 aa)) is catalytic. 3 disulfide bridges follow: C29–C39, C89–C94, and C184–C185. D227 lines the substrate pocket. E229 serves as the catalytic Nucleophile. N230 is a binding site for substrate. The N-linked (GlcNAc...) asparagine glycan is linked to N285. G304 lines the substrate pocket. The Proton donor role is filled by D305. The tract at residues 344–506 (TSLTSGPALT…VSWVISSGFA (163 aa)) is ABD. An intrachain disulfide couples C409 to C447. The substrate site is built by H424, N426, F427, D443, H471, L476, and D496.

The protein belongs to the glycosyl hydrolase 54 family.

The protein localises to the secreted. The enzyme catalyses Hydrolysis of terminal non-reducing alpha-L-arabinofuranoside residues in alpha-L-arabinosides.. The protein operates within glycan metabolism; L-arabinan degradation. Its function is as follows. Alpha-L-arabinofuranosidase involved in the degradation of arabinoxylan, a major component of plant hemicellulose. Able to hydrolyze 1,5-, 1,3- and 1,2-alpha-linkages not only in L-arabinofuranosyl oligosaccharides, but also in polysaccharides containing terminal non-reducing L-arabinofuranoses in side chains, like L-arabinan, arabinogalactan and arabinoxylan. This Aspergillus clavatus (strain ATCC 1007 / CBS 513.65 / DSM 816 / NCTC 3887 / NRRL 1 / QM 1276 / 107) protein is Probable alpha-L-arabinofuranosidase B (abfB).